Consider the following 641-residue polypeptide: NADH-ubiquinone oxidoreductase chain 5 (641 aa).

17 helical membrane passes run 1–21, 33–53, 59–79, 83–103, 121–141, 175–195, 211–231, 243–263, 276–296, 303–322, 367–387, 405–425, 453–473, 476–496, 512–532, 564–584, and 621–641; these read MYLT…VIGR, SLSI…IVLL, ITIY…WAFY, ISIT…LYSI, LFTF…MFVG, VGDL…GSSD, ITIV…QLGL, TPVS…YLIL, LICV…TGLF, VIAY…LGLS, ILPF…ALPF, FLVT…ITAF, PLIM…IGYI, KHLS…VGTL, FGVQ…ALIV, WFDN…GGIF, and IPHY…SIFI.

It belongs to the complex I subunit 5 family.

The protein localises to the mitochondrion inner membrane. The enzyme catalyses a ubiquinone + NADH + 5 H(+)(in) = a ubiquinol + NAD(+) + 4 H(+)(out). Functionally, core subunit of the mitochondrial membrane respiratory chain NADH dehydrogenase (Complex I) that is believed to belong to the minimal assembly required for catalysis. Complex I functions in the transfer of electrons from NADH to the respiratory chain. The immediate electron acceptor for the enzyme is believed to be ubiquinone. The protein is NADH-ubiquinone oxidoreductase chain 5 (ND5) of Allomyces macrogynus.